A 100-amino-acid chain; its full sequence is Large ribosomal subunit protein eL30 (100 aa).

It belongs to the eukaryotic ribosomal protein eL30 family.

The polypeptide is Large ribosomal subunit protein eL30 (rpl30e) (Aeropyrum pernix (strain ATCC 700893 / DSM 11879 / JCM 9820 / NBRC 100138 / K1)).